The following is a 188-amino-acid chain: Capsid protein (188 aa).

The protein belongs to the tymoviruses capsid protein family.

The protein resides in the virion. Self-assembles to form a T=3 icosahedral capsid composed of 180 copies of the capsid protein. The capsid encapsulates the single-stranded RNA genome. This chain is Capsid protein, found in Theobroma cacao (Cacao).